Here is a 290-residue protein sequence, read N- to C-terminus: Enoyl-CoA hydratase, mitochondrial (290 aa).

The transit peptide at 1 to 29 (MAALRALLPRACNSLLSPVRCPEFRRFAS) directs the protein to the mitochondrion. Residue 98–101 (ADIK) coordinates substrate. Residues lysine 101 and lysine 115 each carry the N6-acetyllysine; alternate modification. N6-succinyllysine; alternate occurs at positions 101 and 115. Glycine 141 is a substrate binding site. Lysine 204 is modified (N6-succinyllysine). The residue at position 211 (lysine 211) is an N6-acetyllysine.

This sequence belongs to the enoyl-CoA hydratase/isomerase family. As to quaternary structure, homohexamer; dimer of trimers. As to expression, detected in liver (at protein level).

The protein localises to the mitochondrion matrix. The enzyme catalyses a (3S)-3-hydroxyacyl-CoA = a (2E)-enoyl-CoA + H2O. The catalysed reaction is a (3E)-enoyl-CoA = a 4-saturated (2E)-enoyl-CoA. It catalyses the reaction (3E)-hexenoyl-CoA = (2E)-hexenoyl-CoA. It carries out the reaction (3S)-3-hydroxybutanoyl-CoA = (2E)-butenoyl-CoA + H2O. The enzyme catalyses 3-hydroxyisovaleryl-CoA = 3-methylbut-2-enoyl-CoA + H2O. The catalysed reaction is 3-hydroxypropanoyl-CoA = acryloyl-CoA + H2O. It catalyses the reaction 3-hydroxybutanoyl-CoA = (2E)-butenoyl-CoA + H2O. It carries out the reaction 2-methylpropenoyl-CoA + H2O = (S)-3-hydroxyisobutanoyl-CoA. The enzyme catalyses (3S)-hydroxyhexanoyl-CoA = (2E)-hexenoyl-CoA + H2O. The catalysed reaction is (3S)-hydroxydecanoyl-CoA = (2E)-decenoyl-CoA + H2O. The protein operates within lipid metabolism; fatty acid beta-oxidation. Its function is as follows. Converts unsaturated trans-2-enoyl-CoA species ((2E)-enoyl-CoA) to the corresponding 3(S)-3-hydroxyacyl-CoA species through addition of a water molecule to the double bond. Catalyzes the hydration of medium- and short-chained fatty enoyl-CoA thioesters from 4 carbons long (C4) up to C16. Has high substrate specificity for crotonyl-CoA ((2E)-butenoyl-CoA) and moderate specificity for acryloyl-CoA, 3-methylcrotonyl-CoA (3-methyl-(2E)-butenoyl-CoA) and methacrylyl-CoA ((2E)-2-methylpropenoyl-CoA). Can bind tiglyl-CoA (2-methylcrotonoyl-CoA), but hydrates only a small amount of this substrate. Plays a key role in the beta-oxidation spiral of short- and medium-chain fatty acid oxidation. At a lower rate than the hydratase reaction, catalyzes the isomerase reaction of trans-3-enoyl-CoA species (such as (3E)-hexenoyl-CoA) to trans-2-enoyl-CoA species (such as (2E)-hexenoyl-CoA), which are subsequently hydrated to 3(S)-3-hydroxyacyl-CoA species (such as (3S)-hydroxyhexanoyl-CoA). The chain is Enoyl-CoA hydratase, mitochondrial from Rattus norvegicus (Rat).